A 451-amino-acid chain; its full sequence is Chromosomal replication initiator protein DnaA (451 aa).

The interval 1–77 is domain I, interacts with DnaA modulators; that stretch reads MTENEQIFWN…EVYNAQISVD (77 aa). The domain II stretch occupies residues 77 to 110; it reads DYVFEEDLMIEQNQTKINQKPKQQALNSLPTVTS. The tract at residues 111–329 is domain III, AAA+ region; that stretch reads DLNPKYSFEN…GALKDISLVA (219 aa). ATP-binding residues include G155, G157, K158, and T159. The tract at residues 330 to 451 is domain IV, binds dsDNA; the sequence is NFKQIDTITV…EIETIKNKIK (122 aa).

The protein belongs to the DnaA family. Oligomerizes as a right-handed, spiral filament on DNA at oriC.

It localises to the cytoplasm. In terms of biological role, plays an essential role in the initiation and regulation of chromosomal replication. ATP-DnaA binds to the origin of replication (oriC) to initiate formation of the DNA replication initiation complex once per cell cycle. Binds the DnaA box (a 9 base pair repeat at the origin) and separates the double-stranded (ds)DNA. Forms a right-handed helical filament on oriC DNA; dsDNA binds to the exterior of the filament while single-stranded (ss)DNA is stabiized in the filament's interior. The ATP-DnaA-oriC complex binds and stabilizes one strand of the AT-rich DNA unwinding element (DUE), permitting loading of DNA polymerase. After initiation quickly degrades to an ADP-DnaA complex that is not apt for DNA replication. Binds acidic phospholipids. In Streptococcus pyogenes serotype M4 (strain MGAS10750), this protein is Chromosomal replication initiator protein DnaA.